The following is a 267-amino-acid chain: Placental prolactin-related protein 2 (267 aa).

Residues N99 and N121 are each glycosylated (N-linked (GlcNAc...) asparagine). 2 disulfides stabilise this stretch: C126–C244 and C261–C267.

Belongs to the somatotropin/prolactin family.

Its subcellular location is the secreted. Its function is as follows. Placental prolactin-related proteins may play a specific role during gestation. The chain is Placental prolactin-related protein 2 (PRP2) from Bos taurus (Bovine).